The sequence spans 398 residues: Acetate kinase (398 aa).

N7 lines the Mg(2+) pocket. K14 provides a ligand contact to ATP. A substrate-binding site is contributed by R90. The active-site Proton donor/acceptor is D147. ATP-binding positions include 207–211, 282–284, and 330–334; these read HLGNG, DMR, and GIGEN. E383 is a Mg(2+) binding site.

This sequence belongs to the acetokinase family. Homodimer. It depends on Mg(2+) as a cofactor. Mn(2+) is required as a cofactor.

Its subcellular location is the cytoplasm. It carries out the reaction acetate + ATP = acetyl phosphate + ADP. The protein operates within metabolic intermediate biosynthesis; acetyl-CoA biosynthesis; acetyl-CoA from acetate: step 1/2. Functionally, catalyzes the formation of acetyl phosphate from acetate and ATP. Can also catalyze the reverse reaction. The polypeptide is Acetate kinase (Symbiobacterium thermophilum (strain DSM 24528 / JCM 14929 / IAM 14863 / T)).